We begin with the raw amino-acid sequence, 329 residues long: Ribosomal RNA small subunit methyltransferase H (329 aa).

S-adenosyl-L-methionine contacts are provided by residues 34 to 36, Asp-52, Phe-79, Asp-100, and Gln-107; that span reads GGY. The disordered stretch occupies residues 285–329; it reads GEDEVAHNPRARSAKLRAAERTSAPAHKDDQSSSWPRLSDVMRGG.

It belongs to the methyltransferase superfamily. RsmH family.

The protein localises to the cytoplasm. The catalysed reaction is cytidine(1402) in 16S rRNA + S-adenosyl-L-methionine = N(4)-methylcytidine(1402) in 16S rRNA + S-adenosyl-L-homocysteine + H(+). In terms of biological role, specifically methylates the N4 position of cytidine in position 1402 (C1402) of 16S rRNA. The sequence is that of Ribosomal RNA small subunit methyltransferase H from Bradyrhizobium diazoefficiens (strain JCM 10833 / BCRC 13528 / IAM 13628 / NBRC 14792 / USDA 110).